We begin with the raw amino-acid sequence, 432 residues long: Adenylosuccinate synthetase (432 aa).

Residues 13 to 19 (GDEGKGK) and 41 to 43 (GHT) contribute to the GTP site. The active-site Proton acceptor is the aspartate 14. Aspartate 14 and glycine 41 together coordinate Mg(2+). IMP-binding positions include 14–17 (DEGK), 39–42 (NAGH), threonine 130, arginine 144, glutamine 225, threonine 240, and arginine 304. Catalysis depends on histidine 42, which acts as the Proton donor. 300 to 306 (ATTGRRR) is a binding site for substrate. GTP contacts are provided by residues arginine 306, 332-334 (KLD), and 415-417 (STG).

The protein belongs to the adenylosuccinate synthetase family. As to quaternary structure, homodimer. Mg(2+) is required as a cofactor.

The protein resides in the cytoplasm. The catalysed reaction is IMP + L-aspartate + GTP = N(6)-(1,2-dicarboxyethyl)-AMP + GDP + phosphate + 2 H(+). The protein operates within purine metabolism; AMP biosynthesis via de novo pathway; AMP from IMP: step 1/2. In terms of biological role, plays an important role in the de novo pathway of purine nucleotide biosynthesis. Catalyzes the first committed step in the biosynthesis of AMP from IMP. The chain is Adenylosuccinate synthetase from Citrobacter koseri (strain ATCC BAA-895 / CDC 4225-83 / SGSC4696).